The primary structure comprises 418 residues: Fumarylacetoacetase (418 aa).

D127 serves as a coordination point for Ca(2+). H134 acts as the Proton acceptor in catalysis. Ca(2+) contacts are provided by E200, E202, and D235. The Mg(2+) site is built by D235, K255, and T259.

Belongs to the FAH family. Ca(2+) is required as a cofactor. Requires Mg(2+) as cofactor. Highly expressed in the intestine and the hypodermis.

It catalyses the reaction 4-fumarylacetoacetate + H2O = acetoacetate + fumarate + H(+). It functions in the pathway amino-acid degradation; L-phenylalanine degradation; acetoacetate and fumarate from L-phenylalanine: step 6/6. Functionally, fumarylacetoacetase involved in the tyrosine degradation pathway. The chain is Fumarylacetoacetase from Caenorhabditis elegans.